Here is a 492-residue protein sequence, read N- to C-terminus: MIKLFNTLSKNVEVFKPIDEEVKIYCCGVTVYDLCHLGHARSYIAWDVLRRFLIYSDYKVKFVQNFTDIDDKILKRAKEENSSMKQVSEKNIAEFHKDMDALGIMRPDSMPKATNHICNICSFIKVLEKKGFAYARGGDVYYSVFKNKDYGKLSNQNILEQNINQQGRMTSDESNKKNNPQDFALWKKAKENEPSFDSPWGKGRPGWHIECSAMVKDELGETIDIHLGGADLIFPHHENEIAQSESANNKKLANYWLHNGMVNVNGQKMSKSLKNFTTIRDLLDSGTSPMTLRYFVLTVNYRKPLDFTDEALKSASEAWKTINVALSFFDITKKENLSIEVNETNEFVEEKYKEKINYEISQKKIKFTNALNNDLNTAGAIAIIYELAKPLKNFINQFQRIKNLDINTNEKFHLRETLKTLEELTQVLGLKKEEIIIENKITEEQIISLINKRLIAKKGRDYAEADKIRNSLKEKGIELIDQSTELTTWVRL.

Position 27 (Cys27) interacts with Zn(2+). A 'HIGH' region motif is present at residues Val29–His39. The Zn(2+) site is built by Cys211, His236, and Glu240. A 'KMSKS' region motif is present at residues Lys268–Ser272. Lys271 lines the ATP pocket.

It belongs to the class-I aminoacyl-tRNA synthetase family. In terms of assembly, monomer. Zn(2+) is required as a cofactor.

The protein localises to the cytoplasm. The enzyme catalyses tRNA(Cys) + L-cysteine + ATP = L-cysteinyl-tRNA(Cys) + AMP + diphosphate. This chain is Cysteine--tRNA ligase, found in Prochlorococcus marinus (strain MIT 9515).